The sequence spans 568 residues: Potassium-transporting ATPase potassium-binding subunit (568 aa).

Helical transmembrane passes span 7–27 (ITIGIFFLCVLALTRPLGGFL), 65–85 (HYALALLSFKIVCFVAVYAIL), 136–156 (GLTVQNFVSAAAGIAVAAAII), 179–199 (LYVLLPISVVLSLFYVFEGIP), 254–274 (LTNFVEMISIFAIGAGLTNVF), 285–305 (WAVFSAMSVLFFVGVTAVYWA), 332–352 (FGVAASALFAAVTTDASCGAV), 354–374 (AMHESFLPLGGMVPLINMMLG), 377–397 (IIGGVGAGLYGFILFAIIAVF), 423–443 (MLAVLCLPLVMLGFTAVAVVV), 487–507 (ITLGIGMMIGRFFVIVPALAI), and 530–550 (LFIGLVAGVIIIVGGLTFLPA).

The protein belongs to the KdpA family. As to quaternary structure, the system is composed of three essential subunits: KdpA, KdpB and KdpC.

It localises to the cell inner membrane. Its function is as follows. Part of the high-affinity ATP-driven potassium transport (or Kdp) system, which catalyzes the hydrolysis of ATP coupled with the electrogenic transport of potassium into the cytoplasm. This subunit binds the periplasmic potassium ions and delivers the ions to the membrane domain of KdpB through an intramembrane tunnel. The chain is Potassium-transporting ATPase potassium-binding subunit from Granulibacter bethesdensis (strain ATCC BAA-1260 / CGDNIH1).